The following is a 118-amino-acid chain: Small ribosomal subunit protein uS13 (118 aa).

Residues 94 to 118 form a disordered region; sequence GLPLRGQRTKTNARTRKGRRKGTSS.

This sequence belongs to the universal ribosomal protein uS13 family. Part of the 30S ribosomal subunit. Forms a loose heterodimer with protein S19. Forms two bridges to the 50S subunit in the 70S ribosome.

Its function is as follows. Located at the top of the head of the 30S subunit, it contacts several helices of the 16S rRNA. In the 70S ribosome it contacts the 23S rRNA (bridge B1a) and protein L5 of the 50S subunit (bridge B1b), connecting the 2 subunits; these bridges are implicated in subunit movement. Contacts the tRNAs in the A and P-sites. This chain is Small ribosomal subunit protein uS13, found in Legionella pneumophila (strain Paris).